The following is an 812-amino-acid chain: Glycerol-3-phosphate acyltransferase (812 aa).

The short motif at 308-313 (CHRSHM) is the HXXXXD motif element.

The protein belongs to the GPAT/DAPAT family.

The protein localises to the cell inner membrane. It catalyses the reaction sn-glycerol 3-phosphate + an acyl-CoA = a 1-acyl-sn-glycero-3-phosphate + CoA. The protein operates within phospholipid metabolism; CDP-diacylglycerol biosynthesis; CDP-diacylglycerol from sn-glycerol 3-phosphate: step 1/3. In Pseudoalteromonas translucida (strain TAC 125), this protein is Glycerol-3-phosphate acyltransferase.